Here is a 176-residue protein sequence, read N- to C-terminus: ATP-dependent protease subunit HslV (176 aa).

Threonine 5 is a catalytic residue. The Na(+) site is built by alanine 161, cysteine 164, and threonine 167.

This sequence belongs to the peptidase T1B family. HslV subfamily. A double ring-shaped homohexamer of HslV is capped on each side by a ring-shaped HslU homohexamer. The assembly of the HslU/HslV complex is dependent on binding of ATP.

Its subcellular location is the cytoplasm. The enzyme catalyses ATP-dependent cleavage of peptide bonds with broad specificity.. With respect to regulation, allosterically activated by HslU binding. In terms of biological role, protease subunit of a proteasome-like degradation complex believed to be a general protein degrading machinery. The sequence is that of ATP-dependent protease subunit HslV from Desulforamulus reducens (strain ATCC BAA-1160 / DSM 100696 / MI-1) (Desulfotomaculum reducens).